An 82-amino-acid chain; its full sequence is Acyl carrier protein (82 aa).

The region spanning 4–79 (PEMESRLKKI…DALNYIEQKL (76 aa)) is the Carrier domain. Ser-39 is modified (O-(pantetheine 4'-phosphoryl)serine).

This sequence belongs to the acyl carrier protein (ACP) family. In terms of processing, 4'-phosphopantetheine is transferred from CoA to a specific serine of apo-ACP by AcpS. This modification is essential for activity because fatty acids are bound in thioester linkage to the sulfhydryl of the prosthetic group.

It is found in the cytoplasm. It functions in the pathway lipid metabolism; fatty acid biosynthesis. In terms of biological role, carrier of the growing fatty acid chain in fatty acid biosynthesis. The chain is Acyl carrier protein from Roseiflexus sp. (strain RS-1).